Consider the following 458-residue polypeptide: MKIIILGAGQVGGTLAENLVGENNDITVVDTNGERLRTLQDKFDLRVVQGHGSHPRVLREAGADDADMLVAVTSSDETNMVACQVAYSLFNTPNRIARIRSPDYVRDADKLFHSDAVPIDHLIAPEQLVIDNIYRLIEYPGALQVVNFAEGKVSLAVVKAYYGGPLIGNALSTMREHMPHIDTRVAAIFRHDRPIRPQGSTIVEAGDEVFFIAASQHIRAVMSELQRLEKPYKRIMLVGGGNIGAGLARRLEKDYSVKLIERNQQRAAELAEKLQNTIVFFGDASDQELLAEEHIDQVDLFIAVTNDDEANIMSAMLAKRMGAKKVMVLIQRRAYVDLVQGSVIDIAISPQQATISALLSHVRKADIVGVSSLRRGVAEAIEAVAHGDESTSRVVGRVIDEIKLPPGTIIGAVVRGNDVMIANDNLRIEQGDHVIMFLTDKKFITDVERLFQPSPFFL.

In terms of domain architecture, RCK N-terminal 1 spans Met1–Ile123. NAD(+)-binding positions include Gly7–Val11, Asp30, Thr73–Ser74, and Arg98. An RCK C-terminal 1 domain is found at Leu143–Arg227. The RCK N-terminal 2 domain maps to Tyr232–Ile348. Residue Arg234–Arg262 participates in NAD(+) binding. In terms of domain architecture, RCK C-terminal 2 spans Val368 to Pro453.

It localises to the cell inner membrane. Functionally, part of the constitutive potassium transport systems TrkG and TrkH. May regulate the transport activity of TrkG and TrkH systems. Binds to NAD(+) and NADH. The sequence is that of Trk system potassium uptake protein TrkA (trkA) from Escherichia coli O157:H7.